Reading from the N-terminus, the 315-residue chain is Beta-ketoacyl-[acyl-carrier-protein] synthase III (315 aa).

Catalysis depends on residues Cys115 and His244. Positions 245–249 are ACP-binding; it reads QANAR. Residue Asn274 is part of the active site.

The protein belongs to the thiolase-like superfamily. FabH family. Homodimer.

It localises to the cytoplasm. The catalysed reaction is malonyl-[ACP] + acetyl-CoA + H(+) = 3-oxobutanoyl-[ACP] + CO2 + CoA. It functions in the pathway lipid metabolism; fatty acid biosynthesis. In terms of biological role, catalyzes the condensation reaction of fatty acid synthesis by the addition to an acyl acceptor of two carbons from malonyl-ACP. Catalyzes the first condensation reaction which initiates fatty acid synthesis and may therefore play a role in governing the total rate of fatty acid production. Possesses both acetoacetyl-ACP synthase and acetyl transacylase activities. Its substrate specificity determines the biosynthesis of branched-chain and/or straight-chain of fatty acids. This Rubrobacter xylanophilus (strain DSM 9941 / JCM 11954 / NBRC 16129 / PRD-1) protein is Beta-ketoacyl-[acyl-carrier-protein] synthase III.